Reading from the N-terminus, the 1087-residue chain is Exportin-7-A (1087 aa).

The region spanning 30–96 is the Importin N-terminal domain; that stretch reads AEKALVEFTN…RNYVLTYLAT (67 aa).

It belongs to the exportin family. As to expression, expressed in oocytes (at protein level).

It localises to the cytoplasm. Its subcellular location is the nucleus. In terms of biological role, mediates the nuclear export of proteins (cargos) with broad substrate specificity. The polypeptide is Exportin-7-A (xpo7-a) (Xenopus laevis (African clawed frog)).